A 484-amino-acid chain; its full sequence is Cathepsin F (484 aa).

The signal sequence occupies residues 1 to 19 (MAPWLQLLSLLGLLPGAVA). A propeptide spans 20-270 (APAQPRAASF…MKQAKSVGDL (251 aa)) (activation peptide). N-linked (GlcNAc...) asparagine glycans are attached at residues Asn160 and Asn195. 2 cysteine pairs are disulfide-bonded: Cys292–Cys333 and Cys326–Cys366. Cys295 is a catalytic residue. Residues Asn367 and Asn378 are each glycosylated (N-linked (GlcNAc...) asparagine). A disulfide bridge links Cys424 with Cys472. His431 is an active-site residue. Residue Asn440 is glycosylated (N-linked (GlcNAc...) asparagine). Asn451 is an active-site residue.

It belongs to the peptidase C1 family. High expression levels in heart, skeletal muscle, brain, testis and ovary; moderate levels in prostate, placenta, liver and colon; and no detectable expression in peripheral leukocytes and thymus.

Its subcellular location is the lysosome. The catalysed reaction is The recombinant enzyme cleaves synthetic substrates with Phe and Leu (better than Val) in P2, with high specificity constant (kcat/Km) comparable to that of cathepsin L.. Thiol protease which is believed to participate in intracellular degradation and turnover of proteins. Has also been implicated in tumor invasion and metastasis. This is Cathepsin F (CTSF) from Homo sapiens (Human).